A 213-amino-acid chain; its full sequence is Large ribosomal subunit protein uL1 (213 aa).

Belongs to the universal ribosomal protein uL1 family. As to quaternary structure, part of the 50S ribosomal subunit.

Its function is as follows. Binds directly to 23S rRNA. Probably involved in E site tRNA release. In terms of biological role, protein L1 is also a translational repressor protein, it controls the translation of its operon by binding to its mRNA. The protein is Large ribosomal subunit protein uL1 of Methanococcus maripaludis (strain C6 / ATCC BAA-1332).